Here is an 882-residue protein sequence, read N- to C-terminus: DNA mismatch repair protein MutS (882 aa).

629 to 636 (GPNMGGKS) provides a ligand contact to ATP.

Belongs to the DNA mismatch repair MutS family.

Functionally, this protein is involved in the repair of mismatches in DNA. It is possible that it carries out the mismatch recognition step. This protein has a weak ATPase activity. The sequence is that of DNA mismatch repair protein MutS from Ralstonia nicotianae (strain ATCC BAA-1114 / GMI1000) (Ralstonia solanacearum).